The sequence spans 312 residues: Aquaglyceroporin-2 (312 aa).

Helical transmembrane passes span 78-98, 104-124, 151-171, 203-223, 239-259, and 286-306; these read FLGNFVLIYIAKGAVITSLLV, LGLTIGIGVAVTMALYVSLGI, YIAAQMLGTFLGAACAYGVFA, GIFYPIFAELISTAVLLLCVC, VAIGALVFVMVNNFGLASPLA, and YYFWVPLVVPFFGAILGLFLY.

This sequence belongs to the MIP/aquaporin (TC 1.A.8) family.

The protein localises to the membrane. The enzyme catalyses glycerol(in) = glycerol(out). It catalyses the reaction H2O(in) = H2O(out). It carries out the reaction urea(in) = urea(out). In terms of biological role, mediates water and glycerol transport across cell membranes. Permeable to urea. Permeable to methylamine/methylammonium. Permeable to dihydroxyacetone. The chain is Aquaglyceroporin-2 from Trypanosoma brucei brucei.